The sequence spans 263 residues: Cysteine-rich repeat secretory protein 55 (263 aa).

Positions 1 to 20 (MKTLVVKCFLLLALVCSCRA) are cleaved as a signal peptide. 2 Gnk2-homologous domains span residues 22-126 (DSIW…QENF) and 132-240 (TGAG…FYPF).

This sequence belongs to the cysteine-rich repeat secretory protein family.

The protein resides in the secreted. In Arabidopsis thaliana (Mouse-ear cress), this protein is Cysteine-rich repeat secretory protein 55 (CRRSP55).